Here is a 285-residue protein sequence, read N- to C-terminus: Chemotaxis protein LafT (285 aa).

A run of 4 helical transmembrane segments spans residues 4–23 (FLGV…WAGG), 34–51 (FLII…GNPP), 171–191 (ALPG…MQAI), and 201–222 (HVAA…GLDP). The Cytoplasmic segment spans residues 223–285 (LSNAMAQRVK…MEKWLAEQEG (63 aa)).

It belongs to the MotA family.

It is found in the cell inner membrane. Required for rotation of the flagellar motor. Probable transmembrane proton channel. This Vibrio parahaemolyticus serotype O3:K6 (strain RIMD 2210633) protein is Chemotaxis protein LafT (lafT).